A 329-amino-acid chain; its full sequence is Sex comb on midleg-like protein 1 (329 aa).

Phosphoserine is present on residues serine 138 and serine 238. The disordered stretch occupies residues 138–157 (SPTLPVSRRENNSPSNLPRP). Residues 258–325 (WSVEAVVLFL…YYIDRLKQGK (68 aa)) enclose the SAM domain.

The protein belongs to the SCM family. As to expression, ubiquitous. Expressed in fetal and adult tissues.

The protein localises to the nucleus. Functionally, putative Polycomb group (PcG) protein. PcG proteins act by forming multiprotein complexes, which are required to maintain the transcriptionally repressive state of homeotic genes throughout development. May be involved in spermatogenesis during sexual maturation. The chain is Sex comb on midleg-like protein 1 (SCML1) from Homo sapiens (Human).